The chain runs to 1676 residues: Anucleate primary sterigmata protein A (1676 aa).

The span at 1-11 shows a compositional bias: polar residues; sequence MEDSQRGNASM. Residues 1 to 35 are disordered; it reads MEDSQRGNASMMSMMDDPFVVSPEGARDPPSTNQY. Residues 51-127 adopt a coiled-coil conformation; it reads AQAKRALEAH…EIGQETARAF (77 aa). 7 disordered regions span residues 160–180, 353–394, 439–712, 1027–1050, 1176–1201, 1220–1270, and 1297–1354; these read QATN…NQSN, RLRQ…TPRH, DEVE…SRRP, GTST…PVEP, PLGA…DQGA, VRPL…QASS, and PASA…RRSS. A compositionally biased stretch (low complexity) spans 163–172; the sequence is NSPSKVSVPS. 2 coiled-coil regions span residues 193–359 and 408–453; these read TSLL…QQEA and HAHR…AANG. Composition is skewed to basic and acidic residues over residues 355–370, 439–448, 461–470, 479–489, and 503–522; these read RQQE…RPHD, DEVEQRRRDS, TKAETRKPAR, KKAEVEIHDSD, and ASND…RSDA. Positions 593–602 are enriched in low complexity; that stretch reads SYYSTASTSA. Over residues 609-620 the composition is skewed to polar residues; it reads DPGTPSISQFST. Residues 623–636 show a composition bias toward basic residues; it reads YRLRKKRSVLRKIR. Residues 647–664 are compositionally biased toward polar residues; the sequence is SRPSSARESPSTSFTRDT. Residues 678–687 show a composition bias toward acidic residues; the sequence is AEVDGDEDDF. The span at 1032 to 1042 shows a compositional bias: low complexity; that stretch reads TVEFSVSSISS. Residues 1191–1201 are compositionally biased toward polar residues; sequence SGSSNQADQGA. Residues 1314 to 1341 are compositionally biased toward polar residues; sequence RASSQQRPRTPNESALQVGSAKTTTSRA. In terms of domain architecture, PH spans 1393–1504; sequence QTMIGEFLWK…WFNALSYLLV (112 aa). Acidic residues predominate over residues 1511–1524; sequence EEAENGVTLDDIDE. 2 disordered regions span residues 1511-1589 and 1654-1676; these read EEAE…QASS and HDVS…HSHH. 2 stretches are compositionally biased toward polar residues: residues 1534-1548 and 1580-1589; these read RQTA…QSRG and YSDQARQASS.

It is found in the membrane. Required for nuclear positioning and completion of asexual development. This chain is Anucleate primary sterigmata protein A (apsA), found in Emericella nidulans (strain FGSC A4 / ATCC 38163 / CBS 112.46 / NRRL 194 / M139) (Aspergillus nidulans).